Reading from the N-terminus, the 956-residue chain is Matrilin-2 (956 aa).

The first 23 residues, 1–23 (MEKMLVGCLLMLGQLFLVLPVDG), serve as a signal peptide directing secretion. One can recognise a VWFA 1 domain in the interval 57 to 232 (DLVFIIDSSR…SQIESLTSVF (176 aa)). Residue Asn221 is glycosylated (N-linked (GlcNAc...) asparagine). EGF-like domains lie at 238 to 278 (TVHM…KTCR), 279 to 319 (IQDL…KRCT), 320 to 360 (AVDY…KTCS), 361 to 401 (KIDY…KTCR), 402 to 442 (RINY…KTCS), 443 to 483 (RVDH…KTCS), 484 to 524 (RADY…KTCA), 525 to 565 (KLDS…KTCR), 566 to 606 (RKDV…KRCR), and 607 to 647 (RKNV…KHCK). 30 disulfides stabilise this stretch: Cys242–Cys253, Cys249–Cys262, Cys264–Cys277, Cys283–Cys294, Cys290–Cys303, Cys305–Cys318, Cys324–Cys335, Cys331–Cys344, Cys346–Cys359, Cys365–Cys376, Cys372–Cys385, Cys387–Cys400, Cys406–Cys417, Cys413–Cys426, Cys428–Cys441, Cys447–Cys458, Cys454–Cys467, Cys469–Cys482, Cys488–Cys499, Cys495–Cys508, Cys510–Cys523, Cys529–Cys540, Cys536–Cys549, Cys551–Cys564, Cys570–Cys581, Cys577–Cys590, Cys592–Cys605, Cys611–Cys622, Cys618–Cys631, and Cys633–Cys646. One can recognise a VWFA 2 domain in the interval 655–830 (DLVFVIDGSK…STMGEISEKL (176 aa)). Asn890 carries N-linked (GlcNAc...) asparagine glycosylation. Residues 917-955 (KCENLILFQNVANEEVRKLTQRLEEMTQRMEALENRLKY) are a coiled coil.

In terms of tissue distribution, detected in a variety of organs, including calvaria, uterus, heart and brain, as well as fibroblast and osteoblast cell lines.

Its subcellular location is the secreted. Functionally, involved in matrix assembly. The protein is Matrilin-2 (Matn2) of Mus musculus (Mouse).